The sequence spans 450 residues: tRNA modification GTPase MnmE (450 aa).

Residues R26, E84, and K123 each contribute to the (6S)-5-formyl-5,6,7,8-tetrahydrofolate site. The region spanning 219-376 is the TrmE-type G domain; it reads GMHVVLVGQP…LKAKLLEMIG (158 aa). Residue N229 participates in K(+) binding. Residues 229 to 234, 248 to 254, 273 to 276, and 357 to 359 contribute to the GTP site; these read NVGKSS, TDIAGTT, DTAG, and SAR. S233 contacts Mg(2+). Positions 248, 250, and 253 each coordinate K(+). T254 serves as a coordination point for Mg(2+). Position 450 (K450) interacts with (6S)-5-formyl-5,6,7,8-tetrahydrofolate.

Belongs to the TRAFAC class TrmE-Era-EngA-EngB-Septin-like GTPase superfamily. TrmE GTPase family. In terms of assembly, homodimer. Heterotetramer of two MnmE and two MnmG subunits. Requires K(+) as cofactor.

The protein resides in the cytoplasm. Its function is as follows. Exhibits a very high intrinsic GTPase hydrolysis rate. Involved in the addition of a carboxymethylaminomethyl (cmnm) group at the wobble position (U34) of certain tRNAs, forming tRNA-cmnm(5)s(2)U34. The chain is tRNA modification GTPase MnmE from Chromobacterium violaceum (strain ATCC 12472 / DSM 30191 / JCM 1249 / CCUG 213 / NBRC 12614 / NCIMB 9131 / NCTC 9757 / MK).